The primary structure comprises 205 residues: Holliday junction branch migration complex subunit RuvA (205 aa).

The segment at 1 to 64 (MIGRIRGLLV…EDAQLLYGFI (64 aa)) is domain I. Residues 65–143 (SKQERALFRL…SLMEASVGSE (79 aa)) form a domain II region. The segment at 144-156 (REFMLQSNYTAPV) is flexible linker. The interval 157 to 205 (VANTAEEDAIAALLSLGYKPAQASKAVSAVYVDGIDSESLIKSALKSML) is domain III.

This sequence belongs to the RuvA family. As to quaternary structure, homotetramer. Forms an RuvA(8)-RuvB(12)-Holliday junction (HJ) complex. HJ DNA is sandwiched between 2 RuvA tetramers; dsDNA enters through RuvA and exits via RuvB. An RuvB hexamer assembles on each DNA strand where it exits the tetramer. Each RuvB hexamer is contacted by two RuvA subunits (via domain III) on 2 adjacent RuvB subunits; this complex drives branch migration. In the full resolvosome a probable DNA-RuvA(4)-RuvB(12)-RuvC(2) complex forms which resolves the HJ.

The protein resides in the cytoplasm. Its function is as follows. The RuvA-RuvB-RuvC complex processes Holliday junction (HJ) DNA during genetic recombination and DNA repair, while the RuvA-RuvB complex plays an important role in the rescue of blocked DNA replication forks via replication fork reversal (RFR). RuvA specifically binds to HJ cruciform DNA, conferring on it an open structure. The RuvB hexamer acts as an ATP-dependent pump, pulling dsDNA into and through the RuvAB complex. HJ branch migration allows RuvC to scan DNA until it finds its consensus sequence, where it cleaves and resolves the cruciform DNA. The chain is Holliday junction branch migration complex subunit RuvA from Shewanella piezotolerans (strain WP3 / JCM 13877).